The primary structure comprises 214 residues: MKIIMLGAPGAGKGTQAKQIAAKYSIPHISTGDIFRANIKNGTELGKKAKTYMDQGALVPDELTCDLVMDRIQQDDCKNGFVLDGFPRTIPQAKALDDALTKIGEKMDYAIDVDVPDENIVNRMGGRRACLNCGATYHIVFNPTKVEGKCDACGADTVLRDDDKPETVQKRLAVYHEQTQPLIEYYDKQGILKSVDGTKPMDEVFSAIVGILGE.

Residue 10-15 coordinates ATP; the sequence is GAGKGT. The tract at residues 30–59 is NMP; sequence STGDIFRANIKNGTELGKKAKTYMDQGALV. AMP is bound by residues Thr-31, Arg-36, 57-59, 85-88, and Gln-92; these read ALV and GFPR. The interval 126 to 163 is LID; it reads GRRACLNCGATYHIVFNPTKVEGKCDACGADTVLRDDD. Arg-127 contributes to the ATP binding site. 2 residues coordinate Zn(2+): Cys-130 and Cys-133. Position 136–137 (136–137) interacts with ATP; it reads TY. Positions 150 and 153 each coordinate Zn(2+). AMP contacts are provided by Arg-160 and Arg-171. Lys-199 lines the ATP pocket.

It belongs to the adenylate kinase family. Monomer.

It is found in the cytoplasm. The catalysed reaction is AMP + ATP = 2 ADP. It participates in purine metabolism; AMP biosynthesis via salvage pathway; AMP from ADP: step 1/1. Catalyzes the reversible transfer of the terminal phosphate group between ATP and AMP. Plays an important role in cellular energy homeostasis and in adenine nucleotide metabolism. This Agathobacter rectalis (strain ATCC 33656 / DSM 3377 / JCM 17463 / KCTC 5835 / VPI 0990) (Eubacterium rectale) protein is Adenylate kinase.